A 253-amino-acid polypeptide reads, in one-letter code: Large ribosomal subunit protein uL4 (253 aa).

A disordered region spans residues tryptophan 62–threonine 107. A compositionally biased stretch (basic residues) spans arginine 82 to proline 94. Over residues proline 95–threonine 107 the composition is skewed to basic and acidic residues.

It belongs to the universal ribosomal protein uL4 family. As to quaternary structure, part of the 50S ribosomal subunit.

Its function is as follows. One of the primary rRNA binding proteins, this protein initially binds near the 5'-end of the 23S rRNA. It is important during the early stages of 50S assembly. It makes multiple contacts with different domains of the 23S rRNA in the assembled 50S subunit and ribosome. In terms of biological role, forms part of the polypeptide exit tunnel. In Methanosarcina mazei (strain ATCC BAA-159 / DSM 3647 / Goe1 / Go1 / JCM 11833 / OCM 88) (Methanosarcina frisia), this protein is Large ribosomal subunit protein uL4.